We begin with the raw amino-acid sequence, 534 residues long: Calcium-dependent protein kinase 29 (534 aa).

A disordered region spans residues 1–72 (MGFCFSKFGK…STSSGSQIGP (72 aa)). Residue Gly2 is the site of N-myristoyl glycine attachment. The span at 16-27 (IPISSSSDSSPP) shows a compositional bias: low complexity. The segment covering 49-63 (NPQPKPKPAPPPPPS) has biased composition (pro residues). The 259-residue stretch at 85–343 (YDLHKELGRG…AAEALEHPWM (259 aa)) folds into the Protein kinase domain. Residues 91–99 (LGRGQFGIT) and Lys114 each bind ATP. Asp209 (proton acceptor) is an active-site residue. Phosphoserine is present on Ser249. Residues 348 to 378 (ISDKPINSAVLVRMKQFRAMNKLKKLALKVI) are autoinhibitory domain. EF-hand domains lie at 385-420 (EEIK…LGSK), 421-456 (LTES…RHRL), 457-492 (EKEE…YGMG), and 493-527 (DDAT…GTTD). Residues Asp398, Asp400, Ser402, Thr404, Glu409, Asp434, Asp436, Ser438, Thr440, Glu445, Asp470, Asp472, Ser474, Glu481, Asp505, Asp507, Asp509, Arg511, and Glu516 each coordinate Ca(2+).

The protein belongs to the protein kinase superfamily. Ser/Thr protein kinase family. CDPK subfamily.

The protein resides in the membrane. It catalyses the reaction L-seryl-[protein] + ATP = O-phospho-L-seryl-[protein] + ADP + H(+). It carries out the reaction L-threonyl-[protein] + ATP = O-phospho-L-threonyl-[protein] + ADP + H(+). Activated by calcium. Autophosphorylation may play an important role in the regulation of the kinase activity. May play a role in signal transduction pathways that involve calcium as a second messenger. The polypeptide is Calcium-dependent protein kinase 29 (CPK29) (Arabidopsis thaliana (Mouse-ear cress)).